A 196-amino-acid chain; its full sequence is Imidazoleglycerol-phosphate dehydratase (196 aa).

This sequence belongs to the imidazoleglycerol-phosphate dehydratase family.

The protein resides in the cytoplasm. The catalysed reaction is D-erythro-1-(imidazol-4-yl)glycerol 3-phosphate = 3-(imidazol-4-yl)-2-oxopropyl phosphate + H2O. The protein operates within amino-acid biosynthesis; L-histidine biosynthesis; L-histidine from 5-phospho-alpha-D-ribose 1-diphosphate: step 6/9. This chain is Imidazoleglycerol-phosphate dehydratase, found in Dehalococcoides mccartyi (strain CBDB1).